The chain runs to 376 residues: Putative F-box protein At1g30930 (376 aa).

In terms of domain architecture, F-box spans 1-44; that stretch reads MKNSIPIDLIIEIVSRSTAKSVARCHCVSKQWRAIFRRKYFIEL.

The protein is Putative F-box protein At1g30930 of Arabidopsis thaliana (Mouse-ear cress).